A 375-amino-acid polypeptide reads, in one-letter code: DNA replication and repair protein RecF (375 aa).

30–37 (GNNAQGKS) is an ATP binding site.

This sequence belongs to the RecF family.

It localises to the cytoplasm. In terms of biological role, the RecF protein is involved in DNA metabolism; it is required for DNA replication and normal SOS inducibility. RecF binds preferentially to single-stranded, linear DNA. It also seems to bind ATP. The polypeptide is DNA replication and repair protein RecF (Microcystis aeruginosa (strain NIES-843 / IAM M-2473)).